A 154-amino-acid chain; its full sequence is MAASRRLMKELEEIRKCGMENFRNIQVDEANLLTWQGLIVPDNPPYNKGAFRIEINFPAEYPFKPPRITFKTKIYHPNIDEKGQVCLPVISAENWKPATKTDQVIQSLIALVNDPQPEHPLRADLAEEYSNDRKKFCKNAEEFTKKYGEKRPVD.

The 148-residue stretch at Ala2 to Glu149 folds into the UBC core domain. Residue Cys86 is the Glycyl thioester intermediate of the active site.

The protein belongs to the ubiquitin-conjugating enzyme family.

The enzyme catalyses S-ubiquitinyl-[E1 ubiquitin-activating enzyme]-L-cysteine + [E2 ubiquitin-conjugating enzyme]-L-cysteine = [E1 ubiquitin-activating enzyme]-L-cysteine + S-ubiquitinyl-[E2 ubiquitin-conjugating enzyme]-L-cysteine.. The protein operates within protein modification; protein ubiquitination. Its function is as follows. Catalyzes the covalent attachment of ubiquitin to other proteins. In Homo sapiens (Human), this protein is Ubiquitin-conjugating enzyme E2 L5.